The following is a 51-amino-acid chain: UPF0181 protein VV2_0310 (51 aa).

It belongs to the UPF0181 family.

The chain is UPF0181 protein VV2_0310 from Vibrio vulnificus (strain CMCP6).